The chain runs to 728 residues: Phosphoribosylformylglycinamidine synthase subunit PurL (728 aa).

His40 is a catalytic residue. Tyr43 and Lys82 together coordinate ATP. Glu84 is a Mg(2+) binding site. Substrate-binding positions include 85 to 88 (SHNH) and Arg107. His86 serves as the catalytic Proton acceptor. Asp108 contributes to the Mg(2+) binding site. Position 231 (Gln231) interacts with substrate. Position 259 (Asp259) interacts with Mg(2+). 303–305 (ESQ) contacts substrate. ATP-binding residues include Asn483 and Gly520. Asn521 lines the Mg(2+) pocket. Ser523 serves as a coordination point for substrate.

Belongs to the FGAMS family. In terms of assembly, monomer. Part of the FGAM synthase complex composed of 1 PurL, 1 PurQ and 2 PurS subunits.

It is found in the cytoplasm. The catalysed reaction is N(2)-formyl-N(1)-(5-phospho-beta-D-ribosyl)glycinamide + L-glutamine + ATP + H2O = 2-formamido-N(1)-(5-O-phospho-beta-D-ribosyl)acetamidine + L-glutamate + ADP + phosphate + H(+). The protein operates within purine metabolism; IMP biosynthesis via de novo pathway; 5-amino-1-(5-phospho-D-ribosyl)imidazole from N(2)-formyl-N(1)-(5-phospho-D-ribosyl)glycinamide: step 1/2. In terms of biological role, part of the phosphoribosylformylglycinamidine synthase complex involved in the purines biosynthetic pathway. Catalyzes the ATP-dependent conversion of formylglycinamide ribonucleotide (FGAR) and glutamine to yield formylglycinamidine ribonucleotide (FGAM) and glutamate. The FGAM synthase complex is composed of three subunits. PurQ produces an ammonia molecule by converting glutamine to glutamate. PurL transfers the ammonia molecule to FGAR to form FGAM in an ATP-dependent manner. PurS interacts with PurQ and PurL and is thought to assist in the transfer of the ammonia molecule from PurQ to PurL. This Carboxydothermus hydrogenoformans (strain ATCC BAA-161 / DSM 6008 / Z-2901) protein is Phosphoribosylformylglycinamidine synthase subunit PurL.